Consider the following 145-residue polypeptide: D-aminoacyl-tRNA deacylase (145 aa).

Residues 137-138 (GP) carry the Gly-cisPro motif, important for rejection of L-amino acids motif.

The protein belongs to the DTD family. In terms of assembly, homodimer.

The protein resides in the cytoplasm. It carries out the reaction glycyl-tRNA(Ala) + H2O = tRNA(Ala) + glycine + H(+). It catalyses the reaction a D-aminoacyl-tRNA + H2O = a tRNA + a D-alpha-amino acid + H(+). An aminoacyl-tRNA editing enzyme that deacylates mischarged D-aminoacyl-tRNAs. Also deacylates mischarged glycyl-tRNA(Ala), protecting cells against glycine mischarging by AlaRS. Acts via tRNA-based rather than protein-based catalysis; rejects L-amino acids rather than detecting D-amino acids in the active site. By recycling D-aminoacyl-tRNA to D-amino acids and free tRNA molecules, this enzyme counteracts the toxicity associated with the formation of D-aminoacyl-tRNA entities in vivo and helps enforce protein L-homochirality. The polypeptide is D-aminoacyl-tRNA deacylase (Enterobacter sp. (strain 638)).